Consider the following 284-residue polypeptide: Shikimate dehydrogenase (NADP(+)) (284 aa).

Shikimate contacts are provided by residues 20–22 (SIS) and S67. The active-site Proton acceptor is K71. D83 is an NADP(+) binding site. Shikimate contacts are provided by N92 and D107. Residues 129-133 (GAGGA) and I227 each bind NADP(+). Position 229 (Y229) interacts with shikimate. G250 is an NADP(+) binding site.

The protein belongs to the shikimate dehydrogenase family. Homodimer.

It catalyses the reaction shikimate + NADP(+) = 3-dehydroshikimate + NADPH + H(+). It functions in the pathway metabolic intermediate biosynthesis; chorismate biosynthesis; chorismate from D-erythrose 4-phosphate and phosphoenolpyruvate: step 4/7. In terms of biological role, involved in the biosynthesis of the chorismate, which leads to the biosynthesis of aromatic amino acids. Catalyzes the reversible NADPH linked reduction of 3-dehydroshikimate (DHSA) to yield shikimate (SA). The protein is Shikimate dehydrogenase (NADP(+)) of Streptococcus pneumoniae (strain ATCC 700669 / Spain 23F-1).